The following is a 391-amino-acid chain: Galactokinase (391 aa).

34-37 (EHTD) is a substrate binding site. 121 to 127 (GAGLSSS) is an ATP binding site. The Mg(2+) site is built by Ser127 and Glu159. The active-site Proton acceptor is Asp171. Tyr220 is a substrate binding site.

This sequence belongs to the GHMP kinase family. GalK subfamily.

Its subcellular location is the cytoplasm. The catalysed reaction is alpha-D-galactose + ATP = alpha-D-galactose 1-phosphate + ADP + H(+). The protein operates within carbohydrate metabolism; galactose metabolism. Its function is as follows. Catalyzes the transfer of the gamma-phosphate of ATP to D-galactose to form alpha-D-galactose-1-phosphate (Gal-1-P). This chain is Galactokinase, found in Roseiflexus sp. (strain RS-1).